The following is a 150-amino-acid chain: D-aminoacyl-tRNA deacylase (150 aa).

The Gly-cisPro motif, important for rejection of L-amino acids motif lies at 140–141 (GP).

This sequence belongs to the DTD family. Homodimer.

Its subcellular location is the cytoplasm. The enzyme catalyses glycyl-tRNA(Ala) + H2O = tRNA(Ala) + glycine + H(+). It catalyses the reaction a D-aminoacyl-tRNA + H2O = a tRNA + a D-alpha-amino acid + H(+). The catalysed reaction is D-tyrosyl-tRNA(Tyr) + H2O = D-tyrosine + tRNA(Tyr). Functionally, an aminoacyl-tRNA editing enzyme that deacylates mischarged D-aminoacyl-tRNAs. Hydrolyzes D-tyrosyl-tRNA(Tyr) into D-tyrosine and free tRNA(Tyr). May also deacylate mischarged D-leucyl-tRNA(Leu). Also deacylates mischarged glycyl-tRNA(Ala), protecting cells against glycine mischarging by AlaRS. Acts via tRNA-based rather than protein-based catalysis; rejects L-amino acids rather than detecting D-amino acids in the active site. By recycling D-aminoacyl-tRNA to D-amino acids and free tRNA molecules, this enzyme counteracts the toxicity associated with the formation of D-aminoacyl-tRNA entities in vivo and helps enforce protein L-homochirality. The polypeptide is D-aminoacyl-tRNA deacylase (Saccharomyces cerevisiae (strain ATCC 204508 / S288c) (Baker's yeast)).